Reading from the N-terminus, the 445-residue chain is GTPase Obg (445 aa).

Residues 7 to 164 (PEFVDCVTVE…RKLRLEVKSI (158 aa)) enclose the Obg domain. The OBG-type G domain maps to 165 to 342 (ADVALVGFPS…FTLRLGEICQ (178 aa)). GTP is bound by residues 171 to 178 (GFPSVGKS), 196 to 200 (FTTLH), 217 to 220 (DVPG), 291 to 294 (NKID), and 323 to 325 (SAV). Residues S178 and T198 each contribute to the Mg(2+) site. The region spanning 357-434 (IPAKNTPEFS…IGGVIFTWDP (78 aa)) is the OCT domain.

This sequence belongs to the TRAFAC class OBG-HflX-like GTPase superfamily. OBG GTPase family. As to quaternary structure, monomer. Requires Mg(2+) as cofactor.

It is found in the cytoplasm. Functionally, an essential GTPase which binds GTP, GDP and possibly (p)ppGpp with moderate affinity, with high nucleotide exchange rates and a fairly low GTP hydrolysis rate. Plays a role in control of the cell cycle, stress response, ribosome biogenesis and in those bacteria that undergo differentiation, in morphogenesis control. The polypeptide is GTPase Obg (Tropheryma whipplei (strain Twist) (Whipple's bacillus)).